The chain runs to 275 residues: 4-hydroxy-tetrahydrodipicolinate reductase (275 aa).

Residues 13-18, 108-110, and 134-137 each bind NAD(+); these read GAAGKM, GTT, and VPNF. H164 acts as the Proton donor/acceptor in catalysis. H165 lines the (S)-2,3,4,5-tetrahydrodipicolinate pocket. K168 serves as the catalytic Proton donor. 174 to 175 is a binding site for (S)-2,3,4,5-tetrahydrodipicolinate; sequence GT.

This sequence belongs to the DapB family.

It localises to the cytoplasm. It carries out the reaction (S)-2,3,4,5-tetrahydrodipicolinate + NAD(+) + H2O = (2S,4S)-4-hydroxy-2,3,4,5-tetrahydrodipicolinate + NADH + H(+). The enzyme catalyses (S)-2,3,4,5-tetrahydrodipicolinate + NADP(+) + H2O = (2S,4S)-4-hydroxy-2,3,4,5-tetrahydrodipicolinate + NADPH + H(+). It participates in amino-acid biosynthesis; L-lysine biosynthesis via DAP pathway; (S)-tetrahydrodipicolinate from L-aspartate: step 4/4. Catalyzes the conversion of 4-hydroxy-tetrahydrodipicolinate (HTPA) to tetrahydrodipicolinate. In Gloeothece citriformis (strain PCC 7424) (Cyanothece sp. (strain PCC 7424)), this protein is 4-hydroxy-tetrahydrodipicolinate reductase.